The sequence spans 286 residues: 3-methyl-2-oxobutanoate hydroxymethyltransferase (286 aa).

The Mg(2+) site is built by Asp67 and Asp106. 3-methyl-2-oxobutanoate-binding positions include Asp67 to Ser68, Asp106, and Lys136. Glu138 is a binding site for Mg(2+). The active-site Proton acceptor is Glu204.

This sequence belongs to the PanB family. As to quaternary structure, homodecamer; pentamer of dimers. The cofactor is Mg(2+).

It localises to the cytoplasm. It catalyses the reaction 3-methyl-2-oxobutanoate + (6R)-5,10-methylene-5,6,7,8-tetrahydrofolate + H2O = 2-dehydropantoate + (6S)-5,6,7,8-tetrahydrofolate. It participates in cofactor biosynthesis; (R)-pantothenate biosynthesis; (R)-pantoate from 3-methyl-2-oxobutanoate: step 1/2. Catalyzes the reversible reaction in which hydroxymethyl group from 5,10-methylenetetrahydrofolate is transferred onto alpha-ketoisovalerate to form ketopantoate. This Mycobacterium leprae (strain TN) protein is 3-methyl-2-oxobutanoate hydroxymethyltransferase.